The chain runs to 474 residues: ATP synthase subunit beta (474 aa).

G153–T160 contributes to the ATP binding site.

Belongs to the ATPase alpha/beta chains family. In terms of assembly, F-type ATPases have 2 components, CF(1) - the catalytic core - and CF(0) - the membrane proton channel. CF(1) has five subunits: alpha(3), beta(3), gamma(1), delta(1), epsilon(1). CF(0) has three main subunits: a(1), b(2) and c(9-12). The alpha and beta chains form an alternating ring which encloses part of the gamma chain. CF(1) is attached to CF(0) by a central stalk formed by the gamma and epsilon chains, while a peripheral stalk is formed by the delta and b chains.

Its subcellular location is the cell inner membrane. It catalyses the reaction ATP + H2O + 4 H(+)(in) = ADP + phosphate + 5 H(+)(out). Functionally, produces ATP from ADP in the presence of a proton gradient across the membrane. The catalytic sites are hosted primarily by the beta subunits. The polypeptide is ATP synthase subunit beta (Rickettsia typhi (strain ATCC VR-144 / Wilmington)).